We begin with the raw amino-acid sequence, 865 residues long: Leucine--tRNA ligase (865 aa).

Positions 48–58 (PYPSGQLHVGH) match the 'HIGH' region motif. Positions 626–630 (KMSKS) match the 'KMSKS' region motif. Lys-629 contacts ATP.

This sequence belongs to the class-I aminoacyl-tRNA synthetase family.

Its subcellular location is the cytoplasm. The catalysed reaction is tRNA(Leu) + L-leucine + ATP = L-leucyl-tRNA(Leu) + AMP + diphosphate. This is Leucine--tRNA ligase from Gluconobacter oxydans (strain 621H) (Gluconobacter suboxydans).